The chain runs to 889 residues: DNA mismatch repair protein MutS (889 aa).

ATP is bound at residue 641-648 (GPNMAGKS).

The protein belongs to the DNA mismatch repair MutS family.

This protein is involved in the repair of mismatches in DNA. It is possible that it carries out the mismatch recognition step. This protein has a weak ATPase activity. This chain is DNA mismatch repair protein MutS, found in Orientia tsutsugamushi (strain Boryong) (Rickettsia tsutsugamushi).